The primary structure comprises 348 residues: Transmembrane protease serine 12 (348 aa).

The signal sequence occupies residues 1–20 (MRLGLLSVALLFVGSSHLYS). Residues 21–324 (DHYSPSGRHR…EHFFHASTQG (304 aa)) lie on the Extracellular side of the membrane. A disordered region spans residues 24 to 46 (SPSGRHRLGPSPEPAASSQQAEA). The Peptidase S1 domain maps to 78 to 318 (IIGGTEAQAG…YQKWLTEHFF (241 aa)). The cysteines at positions 107 and 123 are disulfide-linked. Catalysis depends on charge relay system residues histidine 122 and aspartate 171. 3 disulfides stabilise this stretch: cysteine 206/cysteine 274, cysteine 237/cysteine 253, and cysteine 264/cysteine 294. Residues asparagine 219 and asparagine 249 are each glycosylated (N-linked (GlcNAc...) asparagine). Serine 268 acts as the Charge relay system in catalysis. A helical transmembrane segment spans residues 325-345 (ILTINILRGQILIALCFVILL). Residues 346 to 348 (ATT) are Cytoplasmic-facing.

This sequence belongs to the peptidase S1 family. As to expression, in testis, expressed in spermatocytes and spermatids (at protein level).

Its subcellular location is the cell membrane. The protein localises to the cytoplasmic vesicle. The protein resides in the secretory vesicle. It localises to the acrosome. Its function is as follows. Required for male fertility. Plays a critical role in sperm capacitation and acrosome reactions during fertilization, and also plays a role in the regulation of proteins involved in spermatogenesis. Regulates protein pathways that promote chromosomal synapsis formation, double-strand break repair, formation of the inner mitochondrial membrane cristae and apoptosis in developing sperm. Required for normal sperm motility and binding to the zona pellucida, potentially via a role in ADAM3 protein maturation. The chain is Transmembrane protease serine 12 from Homo sapiens (Human).